The primary structure comprises 452 residues: Tubulin gamma chain (452 aa).

142-148 (AGGTGSG) serves as a coordination point for GTP.

It belongs to the tubulin family.

Its subcellular location is the cytoplasm. The protein resides in the cytoskeleton. The protein localises to the microtubule organizing center. It is found in the centrosome. Tubulin is the major constituent of microtubules. The gamma chain is found at microtubule organizing centers (MTOC) such as the spindle poles or the centrosome, suggesting that it is involved in the minus-end nucleation of microtubule assembly. In Plasmodium falciparum (isolate NF54), this protein is Tubulin gamma chain (G-TUB).